A 474-amino-acid chain; its full sequence is tRNA-2-methylthio-N(6)-dimethylallyladenosine synthase (474 aa).

The MTTase N-terminal domain maps to 3-120; sequence KKLHIKTWGC…LPEMINSVRG (118 aa). Residues Cys12, Cys49, Cys83, Cys157, Cys161, and Cys164 each coordinate [4Fe-4S] cluster. The Radical SAM core domain occupies 143–375; it reads RAEGPTAFVS…QERINQQAMA (233 aa). The TRAM domain occupies 378–441; the sequence is RRMLGTTQRI…PNSLRGKVVR (64 aa).

This sequence belongs to the methylthiotransferase family. MiaB subfamily. Monomer. It depends on [4Fe-4S] cluster as a cofactor.

The protein localises to the cytoplasm. The enzyme catalyses N(6)-dimethylallyladenosine(37) in tRNA + (sulfur carrier)-SH + AH2 + 2 S-adenosyl-L-methionine = 2-methylsulfanyl-N(6)-dimethylallyladenosine(37) in tRNA + (sulfur carrier)-H + 5'-deoxyadenosine + L-methionine + A + S-adenosyl-L-homocysteine + 2 H(+). Catalyzes the methylthiolation of N6-(dimethylallyl)adenosine (i(6)A), leading to the formation of 2-methylthio-N6-(dimethylallyl)adenosine (ms(2)i(6)A) at position 37 in tRNAs that read codons beginning with uridine. The polypeptide is tRNA-2-methylthio-N(6)-dimethylallyladenosine synthase (Escherichia coli (strain SMS-3-5 / SECEC)).